Here is a 132-residue protein sequence, read N- to C-terminus: ATP synthase epsilon chain, chloroplastic (132 aa).

Belongs to the ATPase epsilon chain family. In terms of assembly, F-type ATPases have 2 components, CF(1) - the catalytic core - and CF(0) - the membrane proton channel. CF(1) has five subunits: alpha(3), beta(3), gamma(1), delta(1), epsilon(1). CF(0) has three main subunits: a, b and c.

The protein localises to the plastid. It localises to the chloroplast thylakoid membrane. Functionally, produces ATP from ADP in the presence of a proton gradient across the membrane. The chain is ATP synthase epsilon chain, chloroplastic from Adiantum capillus-veneris (Maidenhair fern).